The sequence spans 71 residues: UPF0434 protein APH_0052 (71 aa).

A compositionally biased stretch (basic and acidic residues) spans 52–63 (RKLQPEEPKEGS). The segment at 52-71 (RKLQPEEPKEGSELQSSDNQ) is disordered.

This sequence belongs to the UPF0434 family.

The protein is UPF0434 protein APH_0052 of Anaplasma phagocytophilum (strain HZ).